A 330-amino-acid polypeptide reads, in one-letter code: D-lactate dehydrogenase (330 aa).

NAD(+)-binding positions include Arg-155–Ile-156, Asp-175, Met-206–Pro-207, Asn-212, Met-233–Arg-235, and Asp-259. The active site involves Arg-235. Glu-264 is a catalytic residue. His-296 (proton donor) is an active-site residue.

Belongs to the D-isomer specific 2-hydroxyacid dehydrogenase family.

The catalysed reaction is (R)-lactate + NAD(+) = pyruvate + NADH + H(+). The sequence is that of D-lactate dehydrogenase (ldhD) from Streptococcus pyogenes serotype M1.